A 220-amino-acid polypeptide reads, in one-letter code: Deoxyribose-phosphate aldolase 2 (220 aa).

Catalysis depends on Asp89, which acts as the Proton donor/acceptor. Lys151 (schiff-base intermediate with acetaldehyde) is an active-site residue. The active-site Proton donor/acceptor is the Lys180.

Belongs to the DeoC/FbaB aldolase family. DeoC type 1 subfamily.

The protein resides in the cytoplasm. The catalysed reaction is 2-deoxy-D-ribose 5-phosphate = D-glyceraldehyde 3-phosphate + acetaldehyde. The protein operates within carbohydrate degradation; 2-deoxy-D-ribose 1-phosphate degradation; D-glyceraldehyde 3-phosphate and acetaldehyde from 2-deoxy-alpha-D-ribose 1-phosphate: step 2/2. Its function is as follows. Catalyzes a reversible aldol reaction between acetaldehyde and D-glyceraldehyde 3-phosphate to generate 2-deoxy-D-ribose 5-phosphate. The protein is Deoxyribose-phosphate aldolase 2 of Staphylococcus aureus (strain COL).